A 308-amino-acid chain; its full sequence is MIFATLEHILTHISFSIISIVIPTHLMTLVYEIVGLCDSSEKGMITTFFCITGLLVTRWIYSGHVPLSDLYESLMFLSWSFSLIHIVPYFRNYKNFFSKITAPSAILTQGFATSGLLTKMHQSAILVPALQSRWLMMHVSMMLLSYAALLCGSLLSITLLVITFRRKIDIFGKTNHLLISSFSFDETQYVNFSFRNYHRYQLTQRLDYWSYRVIGLGFTLLTIGILSGAVWANEAWGSYWNWDPKETWAFITWTVFAIYLHTRTNKSLQGANSAIVASMGFLIIWICYFGVNLLGRGLHSYGSFTLNI.

Transmembrane regions (helical) follow at residues isoleucine 17–cysteine 37, glycine 43–glycine 63, leucine 70–phenylalanine 90, methionine 142–isoleucine 162, valine 213–asparagine 233, glutamate 246–leucine 260, and alanine 274–leucine 294.

This sequence belongs to the CcmF/CycK/Ccl1/NrfE/CcsA family. As to quaternary structure, may interact with Ccs1.

Its subcellular location is the plastid. The protein resides in the chloroplast thylakoid membrane. Functionally, required during biogenesis of c-type cytochromes (cytochrome c6 and cytochrome f) at the step of heme attachment. In Nymphaea alba (White water-lily), this protein is Cytochrome c biogenesis protein CcsA.